A 163-amino-acid polypeptide reads, in one-letter code: HTH-type transcriptional regulator IscR (163 aa).

Residues 2 to 131 (RLTSKGRYAV…NNITLGELVN (130 aa)) form the HTH rrf2-type domain. A DNA-binding region (H-T-H motif) is located at residues 28 to 51 (LADISERQGISLSYLEQLFSRLRK). Cys-92, Cys-98, and Cys-104 together coordinate [2Fe-2S] cluster.

[2Fe-2S] cluster serves as cofactor.

Regulates the transcription of several operons and genes involved in the biogenesis of Fe-S clusters and Fe-S-containing proteins. The chain is HTH-type transcriptional regulator IscR from Klebsiella pneumoniae (strain 342).